We begin with the raw amino-acid sequence, 549 residues long: Chaperonin GroEL 1 (549 aa).

ATP-binding positions include 30–33 (TLGP), Lys51, 87–91 (DGTTT), Gly415, 479–481 (NAA), and Asp495.

This sequence belongs to the chaperonin (HSP60) family. In terms of assembly, forms a cylinder of 14 subunits composed of two heptameric rings stacked back-to-back. Interacts with the co-chaperonin GroES.

The protein resides in the cytoplasm. It catalyses the reaction ATP + H2O + a folded polypeptide = ADP + phosphate + an unfolded polypeptide.. In terms of biological role, together with its co-chaperonin GroES, plays an essential role in assisting protein folding. The GroEL-GroES system forms a nano-cage that allows encapsulation of the non-native substrate proteins and provides a physical environment optimized to promote and accelerate protein folding. The sequence is that of Chaperonin GroEL 1 from Azoarcus sp. (strain BH72).